Reading from the N-terminus, the 89-residue chain is Pyrin domain-containing protein 1 (89 aa).

In terms of domain architecture, Pyrin spans 1 to 89 (MGTKREAILK…EEAARLQRAA (89 aa)).

Interacts with PYCARD/ASC (via pyrin domain). Phosphorylated. As to expression, predominantly expressed in monocytes, macrophages and granulocytes.

The protein resides in the cytoplasm. Functionally, associates with PYCARD/ASC and modulates its ability to collaborate with MEFV/pyrin and NLRP3/cryopyrin in NF-kappa-B and pro-caspase-1 activation. Suppresses kinase activity of NF-kappa-B inhibitor kinase (IKK) complex, expression of NF-kappa-B inducible genes and inhibits NF-kappa-B activation by cytokines and LPS. The sequence is that of Pyrin domain-containing protein 1 from Homo sapiens (Human).